Reading from the N-terminus, the 635-residue chain is Threonine--tRNA ligase (635 aa).

The TGS domain maps to 1–61 (MINISFPDGS…EHDCKLRILT (61 aa)). Residues 242–533 (DHRKIGKELD…LIEEYAGKFP (292 aa)) are catalytic. Zn(2+) is bound by residues Cys333, His384, and His510.

This sequence belongs to the class-II aminoacyl-tRNA synthetase family. As to quaternary structure, homodimer. Zn(2+) is required as a cofactor.

It localises to the cytoplasm. It catalyses the reaction tRNA(Thr) + L-threonine + ATP = L-threonyl-tRNA(Thr) + AMP + diphosphate + H(+). Functionally, catalyzes the attachment of threonine to tRNA(Thr) in a two-step reaction: L-threonine is first activated by ATP to form Thr-AMP and then transferred to the acceptor end of tRNA(Thr). Also edits incorrectly charged L-seryl-tRNA(Thr). The sequence is that of Threonine--tRNA ligase from Rickettsia typhi (strain ATCC VR-144 / Wilmington).